The chain runs to 492 residues: Putative protein disulfide-isomerase C1F5.02 (492 aa).

Residues Met1–Ala22 form the signal peptide. Positions Glu23 to Leu128 constitute a Thioredoxin 1 domain. Residues Cys51 and Cys54 each act as nucleophile in the active site. Cys51 and Cys54 are oxidised to a cystine. 2 N-linked (GlcNAc...) asparagine glycosylation sites follow: Asn161 and Asn257. Positions Glu323–Ser462 constitute a Thioredoxin 2 domain. Catalysis depends on nucleophile residues Cys385 and Cys388. Cys385 and Cys388 are joined by a disulfide. A disordered region spans residues Lys468 to Leu492. Acidic residues predominate over residues Asp477–Leu492. A Prevents secretion from ER motif is present at residues Ala489–Leu492.

Belongs to the protein disulfide isomerase family.

Its subcellular location is the endoplasmic reticulum lumen. The enzyme catalyses Catalyzes the rearrangement of -S-S- bonds in proteins.. In terms of biological role, participates in the folding of proteins containing disulfide bonds, may be involved in glycosylation, prolyl hydroxylation and triglyceride transfer. The chain is Putative protein disulfide-isomerase C1F5.02 from Schizosaccharomyces pombe (strain 972 / ATCC 24843) (Fission yeast).